Reading from the N-terminus, the 577-residue chain is Insulin-like growth factor 2 mRNA-binding protein 1 (577 aa).

2 RRM domains span residues 2 to 75 (NKLY…HSVP) and 81 to 156 (RKIQ…YIPD). A phosphoserine mark is found at Ser12 and Ser73. Residues 160 to 190 (AQGPENGRRGGFGSRGQPRQGSPVAAGAPAK) form a disordered region. Ser181 is subject to Phosphoserine. 4 KH domains span residues 195–260 (DIPL…CKMI), 276–343 (EVPL…EQEI), 405–470 (QEMV…QGRI), and 487–553 (KLET…QRKI). The segment at 310–324 (ITISSLQDLTLYNPE) is sufficient for nuclear export. The tract at residues 485–495 (EVKLETHIRVP) is sufficient for nuclear export. At Thr528 the chain carries Phosphothreonine.

This sequence belongs to the RRM IMP/VICKZ family. In terms of assembly, can form homodimers and heterodimers with IGF2BP1 and IGF2BP3. Component of the coding region determinant (CRD)-mediated complex, composed of DHX9, HNRNPU, IGF2BP1, SYNCRIP and YBX1. During HCV infection, identified in a HCV IRES-mediated translation complex, at least composed of EIF3C, IGF2BP1, RPS3 and HCV RNA-replicon. Interacts (via the KH domains) with HIV-1 GAG (via the second zinc finger motif of NC). Associates (via the RRM domains and KH domains) with HIV-1 particles. Identified in a mRNP complex, composed of at least DHX9, DDX3X, ELAVL1, HNRNPU, IGF2BP1, ILF3, PABPC1, PCBP2, PTBP2, STAU1, STAU2, SYNCRIP and YBX1. Identified in a IGF2BP1-dependent mRNP granule complex containing untranslated mRNAs. Interacts with DHX9, ELAVL2, HNRNPA2B1, HNRNPC, HNRNPH1, HNRNPU, IGF2BP2, ILF2, and YBX1. Interacts with FMR1. Component of a multisubunit autoregulatory RNP complex (ARC), at least composed of IGF2BP1, PABPC1 and CSDE1/UNR. Directly interacts with PABPC1. Component of a TAU mRNP complex, at least composed of IGF2BP1, ELAVL4 and G3BP. Interacts with ELAVL4 in an RNA-dependent manner. Associates with microtubules and polysomes. Interacts with AGO1 and AGO2. Interacts with ELAVL1 and MATR3. Interacts (via KH3 and KH4 domains) with SEPIN14P20 peptide RBRP; the interaction results in increased binding of IGF2BP1 to N6-methyladenosine (m6A)-containing mRNAs. Post-translationally, phosphorylated at Ser-181 by mTORC2 cotranslationally, promoting binding to the 3'-UTR of IGF2 mRNA. Mainly expressed in the embryo, including in fetal liver, fetal lung, fetal kidney, fetal thymus (at protein level). Also expressed follicles of ovary, as well as in gonocytes of testis, spermatogonia, semen, oocytes and placenta (at protein level). Expressed in various cancers, including testis and lung cancers (at protein level), as well as kidney, prostate and trachea cancers.

Its subcellular location is the nucleus. It localises to the cytoplasm. The protein resides in the perinuclear region. It is found in the P-body. The protein localises to the stress granule. Its subcellular location is the cell projection. It localises to the lamellipodium. The protein resides in the dendrite. It is found in the dendritic spine. The protein localises to the growth cone. Its subcellular location is the filopodium. It localises to the axon. RNA-binding factor that recruits target transcripts to cytoplasmic protein-RNA complexes (mRNPs). This transcript 'caging' into mRNPs allows mRNA transport and transient storage. It also modulates the rate and location at which target transcripts encounter the translational apparatus and shields them from endonuclease attacks or microRNA-mediated degradation. Preferentially binds to N6-methyladenosine (m6A)-containing mRNAs and increases their stability. Plays a direct role in the transport and translation of transcripts required for axonal regeneration in adult sensory neurons. Regulates localized beta-actin/ACTB mRNA translation, a crucial process for cell polarity, cell migration and neurite outgrowth. Co-transcriptionally associates with the ACTB mRNA in the nucleus. This binding involves a conserved 54-nucleotide element in the ACTB mRNA 3'-UTR, known as the 'zipcode'. The RNP thus formed is exported to the cytoplasm, binds to a motor protein and is transported along the cytoskeleton to the cell periphery. During transport, prevents ACTB mRNA from being translated into protein. When the RNP complex reaches its destination near the plasma membrane, IGF2BP1 is phosphorylated. This releases the mRNA, allowing ribosomal 40S and 60S subunits to assemble and initiate ACTB protein synthesis. Monomeric ACTB then assembles into the subcortical actin cytoskeleton. During neuronal development, key regulator of neurite outgrowth, growth cone guidance and neuronal cell migration, presumably through the spatiotemporal fine tuning of protein synthesis, such as that of ACTB. May regulate mRNA transport to activated synapses. Binds to and stabilizes ABCB1/MDR-1 mRNA. During interstinal wound repair, interacts with and stabilizes PTGS2 transcript. PTGS2 mRNA stabilization may be crucial for colonic mucosal wound healing. Binds to the 3'-UTR of IGF2 mRNA by a mechanism of cooperative and sequential dimerization and regulates IGF2 mRNA subcellular localization and translation. Binds to MYC mRNA, in the coding region instability determinant (CRD) of the open reading frame (ORF), hence preventing MYC cleavage by endonucleases and possibly microRNA targeting to MYC-CRD. Binding to MYC mRNA is enhanced by m6A-modification of the CRD. Binds to the 3'-UTR of CD44 mRNA and stabilizes it, hence promotes cell adhesion and invadopodia formation in cancer cells. Binds to the oncofetal H19 transcript and to the neuron-specific TAU mRNA and regulates their localizations. Binds to and stabilizes BTRC/FBW1A mRNA. Binds to the adenine-rich autoregulatory sequence (ARS) located in PABPC1 mRNA and represses its translation. PABPC1 mRNA-binding is stimulated by PABPC1 protein. Prevents BTRC/FBW1A mRNA degradation by disrupting microRNA-dependent interaction with AGO2. Promotes the directed movement of tumor-derived cells by fine-tuning intracellular signaling networks. Binds to MAPK4 3'-UTR and inhibits its translation. Interacts with PTEN transcript open reading frame (ORF) and prevents mRNA decay. This combined action on MAPK4 (down-regulation) and PTEN (up-regulation) antagonizes HSPB1 phosphorylation, consequently it prevents G-actin sequestration by phosphorylated HSPB1, allowing F-actin polymerization. Hence enhances the velocity of cell migration and stimulates directed cell migration by PTEN-modulated polarization. Interacts with Hepatitis C virus (HCV) 5'-UTR and 3'-UTR and specifically enhances translation at the HCV IRES, but not 5'-cap-dependent translation, possibly by recruiting eIF3. Interacts with HIV-1 GAG protein and blocks the formation of infectious HIV-1 particles. Reduces HIV-1 assembly by inhibiting viral RNA packaging, as well as assembly and processing of GAG protein on cellular membranes. During cellular stress, such as oxidative stress or heat shock, stabilizes target mRNAs that are recruited to stress granules, including CD44, IGF2, MAPK4, MYC, PTEN, RAPGEF2 and RPS6KA5 transcripts. This is Insulin-like growth factor 2 mRNA-binding protein 1 (IGF2BP1) from Homo sapiens (Human).